The chain runs to 482 residues: NADH-quinone oxidoreductase subunit N (482 aa).

Transmembrane regions (helical) follow at residues 11–31, 37–57, 77–97, 106–126, 131–151, 166–186, 208–228, 255–275, 279–299, 304–324, 332–352, 376–396, 404–424, and 462–482; these read AVPE…GVFI, IPYY…WYIF, RFSV…FIYA, IPHT…VALV, LLTV…MVAL, FVIG…IFGA, LILV…LGTA, IAAY…LHVQ, MLIV…IVQS, MLAY…LCGT, MFYT…VVLM, AFMM…VGFI, ALIQ…AIVG, and LAVL…HLAF.

Belongs to the complex I subunit 2 family. As to quaternary structure, NDH-1 is composed of 14 different subunits. Subunits NuoA, H, J, K, L, M, N constitute the membrane sector of the complex.

Its subcellular location is the cell inner membrane. The catalysed reaction is a quinone + NADH + 5 H(+)(in) = a quinol + NAD(+) + 4 H(+)(out). Its function is as follows. NDH-1 shuttles electrons from NADH, via FMN and iron-sulfur (Fe-S) centers, to quinones in the respiratory chain. The immediate electron acceptor for the enzyme in this species is believed to be ubiquinone. Couples the redox reaction to proton translocation (for every two electrons transferred, four hydrogen ions are translocated across the cytoplasmic membrane), and thus conserves the redox energy in a proton gradient. In Coxiella burnetii (strain RSA 493 / Nine Mile phase I), this protein is NADH-quinone oxidoreductase subunit N.